A 110-amino-acid chain; its full sequence is uncharacterized protein (110 aa).

Positions 1 to 16 (MKKILLIASMTAGLTA) are cleaved as a signal peptide. Residue Cys-17 is the site of N-palmitoyl cysteine attachment. Residue Cys-17 is the site of S-diacylglycerol cysteine attachment.

It localises to the cell membrane. This is an uncharacterized protein from Salmonella typhimurium (strain LT2 / SGSC1412 / ATCC 700720).